Here is a 409-residue protein sequence, read N- to C-terminus: Serine/threonine transporter SstT (409 aa).

9 helical membrane passes run 24 to 44 (LALGIVIGSVSPQLGLAAGLF), 48 to 68 (FVGALKAVAPVLVFILVAATI), 82 to 102 (IIVLYLIGTFSAALTAVIAGM), 142 to 162 (AIANANYIGILAWALVLGAAL), 194 to 214 (LGIFGLVSSTIAETGFGALAG), 218 to 238 (LLAVLLGCMAFIALVVNPAIV), 292 to 312 (IPLGATVNMGGAAITITVLAM), 319 to 339 (GIQVDFATALLLSLVATVSAC), and 365 to 385 (VAMQVVAVGFIIGVIQDSAET).

Belongs to the dicarboxylate/amino acid:cation symporter (DAACS) (TC 2.A.23) family.

The protein localises to the cell inner membrane. It carries out the reaction L-serine(in) + Na(+)(in) = L-serine(out) + Na(+)(out). It catalyses the reaction L-threonine(in) + Na(+)(in) = L-threonine(out) + Na(+)(out). In terms of biological role, involved in the import of serine and threonine into the cell, with the concomitant import of sodium (symport system). This chain is Serine/threonine transporter SstT, found in Neisseria meningitidis serogroup C (strain 053442).